The chain runs to 287 residues: Festuclavine synthase I (287 aa).

Belongs to the fgaFS/easG family.

It catalyses the reaction festuclavine + NAD(+) = 6,8-dimethyl-6,7-didehydroergoline + NADH + H(+). The protein operates within alkaloid biosynthesis; ergot alkaloid biosynthesis. Its function is as follows. Festuclavine synthase; part of the gene cluster that mediates the biosynthesis of isofumigaclavines, fungal ergot alkaloids. The tryptophan dimethylallyltransferase ifgA catalyzes the first step of ergot alkaloid biosynthesis by condensing dimethylallyl diphosphate (DMAP) and tryptophan to form 4-dimethylallyl-L-tryptophan. The second step is catalyzed by the methyltransferase ifgB that methylates 4-dimethylallyl-L-tryptophan in the presence of S-adenosyl-L-methionine, resulting in the formation of N-methyl-dimethylallyl-L-tryptophan. The catalase ifgD and the FAD-dependent oxidoreductase ifgC then transform N-methyl-dimethylallyl-L-tryptophan to chanoclavine-I which is further oxidized by ifgE in the presence of NAD(+), resulting in the formation of chanoclavine-I aldehyde. The chanoclavine-I aldehyde reductases ifgG and/or fgaOx3 reduce chanoclavine-I aldehyde to dihydrochanoclavine-I aldehyde that spontaneously dehydrates to form 6,8-dimethyl-6,7-didehydroergoline. The festuclavine dehydrogenases ifgF1 and/or ifgF2 then catalyze the reduction of 6,8-dimethyl-6,7-didehydroergoline to form festuclavine. Hydrolysis of festuclavine by a yet undetermined cytochrome P450 monooxygenase (called ifgH) then leads to the formation of isofumigaclavine B which is in turn acetylated by ifgI to isofumigaclavine A. Penicillium roqueforti has interestingly at least two sets of genes for the consumption of chanoclavine-I aldehyde on three different loci, the OYEs ifgG/fgaOx3 and the festuclavine synthase homologs ifgF1/ifgF2. The reason for the duplication of these genes is unclear, probably to ensure the conversion of chanoclavine-I aldehyde by differential gene expression under various environmental conditions. This is Festuclavine synthase I from Penicillium roqueforti (strain FM164).